The chain runs to 272 residues: Putative protein-disulfide oxidoreductase RP025 (272 aa).

The N-terminal stretch at 1-21 (MRNIFIVLIFLFLSNCSEVKA) is a signal peptide. A Thioredoxin domain is found at 74 to 263 (DSREQKKPEI…ISKAVDKALD (190 aa)). An intrachain disulfide couples Cys116 to Cys119.

The protein belongs to the thioredoxin family. DsbA subfamily.

The protein resides in the periplasm. Functionally, may be required for disulfide bond formation in some proteins. This Rickettsia prowazekii (strain Madrid E) protein is Putative protein-disulfide oxidoreductase RP025.